We begin with the raw amino-acid sequence, 936 residues long: Protein NNF2 (936 aa).

Topologically, residues 1-41 (MEEQFTNQKKVSHLQSLMNTKRSEQPTEFAKKHRFKDTLAL) are lumenal. K10 is covalently cross-linked (Glycyl lysine isopeptide (Lys-Gly) (interchain with G-Cter in ubiquitin)). Residues 42 to 62 (FLVFLSFNHFTSLCLLVSFIV) form a helical membrane-spanning segment. Over 63–120 (ATKCKDFLANCFIILFLSKKPSRHIGEVAHIDISTSKVTNGSSNRKSNSRFFGNSKNS) the chain is Cytoplasmic. A helical membrane pass occupies residues 121 to 141 (FVIPIPVLICEILFAMLLKIY). The Lumenal portion of the chain corresponds to 142-245 (GGDYFVKPIK…FKMLGKHSDS (104 aa)). A helical membrane pass occupies residues 246–266 (MIYYLSFHILFFSFASSLLHP). At 267 to 936 (HRQTAENKPL…NIHSLIGNSY (670 aa)) the chain is on the cytoplasmic side. 3 disordered regions span residues 297 to 351 (RISS…SNIL), 387 to 437 (GSNS…DFFS), and 512 to 533 (TSENSLTPTNSNTSYVSNQEKH). Residues 299–308 (SSSSSVSADS) are compositionally biased toward low complexity. A compositionally biased stretch (polar residues) spans 325-351 (LSSSNQTIHPSQQNNSPVPLSSHSNIL). Low complexity-rich tracts occupy residues 394 to 405 (TTTTSTTTSPTT) and 414 to 428 (SLSNEISLSDSSNGN). Polar residues predominate over residues 512–529 (TSENSLTPTNSNTSYVSN).

It localises to the endoplasmic reticulum membrane. The sequence is that of Protein NNF2 (NNF2) from Saccharomyces cerevisiae (strain ATCC 204508 / S288c) (Baker's yeast).